Reading from the N-terminus, the 382-residue chain is Galactokinase (382 aa).

34–37 (EHTD) serves as a coordination point for substrate. ATP is bound at residue 124–130 (GAGLSSS). Mg(2+) contacts are provided by Ser-130 and Glu-162. Asp-174 serves as the catalytic Proton acceptor. Tyr-223 provides a ligand contact to substrate.

It belongs to the GHMP kinase family. GalK subfamily.

Its subcellular location is the cytoplasm. The catalysed reaction is alpha-D-galactose + ATP = alpha-D-galactose 1-phosphate + ADP + H(+). Its pathway is carbohydrate metabolism; galactose metabolism. Functionally, catalyzes the transfer of the gamma-phosphate of ATP to D-galactose to form alpha-D-galactose-1-phosphate (Gal-1-P). The sequence is that of Galactokinase from Salmonella choleraesuis (strain SC-B67).